The following is a 173-amino-acid chain: 3-hydroxydecanoyl-[acyl-carrier-protein] dehydratase (173 aa).

His71 is a catalytic residue.

It belongs to the thioester dehydratase family. FabA subfamily. Homodimer.

Its subcellular location is the cytoplasm. The enzyme catalyses a (3R)-hydroxyacyl-[ACP] = a (2E)-enoyl-[ACP] + H2O. It carries out the reaction (3R)-hydroxydecanoyl-[ACP] = (2E)-decenoyl-[ACP] + H2O. It catalyses the reaction (2E)-decenoyl-[ACP] = (3Z)-decenoyl-[ACP]. The protein operates within lipid metabolism; fatty acid biosynthesis. In terms of biological role, necessary for the introduction of cis unsaturation into fatty acids. Catalyzes the dehydration of (3R)-3-hydroxydecanoyl-ACP to E-(2)-decenoyl-ACP and then its isomerization to Z-(3)-decenoyl-ACP. Can catalyze the dehydratase reaction for beta-hydroxyacyl-ACPs with saturated chain lengths up to 16:0, being most active on intermediate chain length. This chain is 3-hydroxydecanoyl-[acyl-carrier-protein] dehydratase, found in Baumannia cicadellinicola subsp. Homalodisca coagulata.